The primary structure comprises 154 residues: Xanthine-guanine phosphoribosyltransferase (154 aa).

Residues 37–38 (RG), R69, and 88–96 (EDLVDSGDT) each bind 5-phospho-alpha-D-ribose 1-diphosphate. Residue R69 participates in GMP binding. Residue D89 participates in Mg(2+) binding. 2 residues coordinate guanine: D92 and I135. Xanthine is bound by residues D92 and I135. GMP is bound by residues 92–96 (DSGDT) and 134–135 (WI).

This sequence belongs to the purine/pyrimidine phosphoribosyltransferase family. XGPT subfamily. In terms of assembly, homotetramer. Requires Mg(2+) as cofactor.

It is found in the cell inner membrane. It carries out the reaction GMP + diphosphate = guanine + 5-phospho-alpha-D-ribose 1-diphosphate. The catalysed reaction is XMP + diphosphate = xanthine + 5-phospho-alpha-D-ribose 1-diphosphate. It catalyses the reaction IMP + diphosphate = hypoxanthine + 5-phospho-alpha-D-ribose 1-diphosphate. It participates in purine metabolism; GMP biosynthesis via salvage pathway; GMP from guanine: step 1/1. Its pathway is purine metabolism; XMP biosynthesis via salvage pathway; XMP from xanthine: step 1/1. In terms of biological role, purine salvage pathway enzyme that catalyzes the transfer of the ribosyl-5-phosphate group from 5-phospho-alpha-D-ribose 1-diphosphate (PRPP) to the N9 position of the 6-oxopurines guanine and xanthine to form the corresponding ribonucleotides GMP (guanosine 5'-monophosphate) and XMP (xanthosine 5'-monophosphate), with the release of PPi. To a lesser extent, also acts on hypoxanthine. The chain is Xanthine-guanine phosphoribosyltransferase from Vibrio vulnificus (strain CMCP6).